We begin with the raw amino-acid sequence, 433 residues long: Alpha-(1,3)-fucosyltransferase fut-1 (433 aa).

Topologically, residues 1–12 are cytoplasmic; the sequence is MTARSIKLFFAR. The chain crosses the membrane as a helical; Signal-anchor for type II membrane protein span at residues 13–32; that stretch reads WKYLMFACCITYLLVIYAPI. Residues 33–433 are Lumenal-facing; the sequence is SKSEQKDWKE…GTLVDSIPLD (401 aa). 2 N-linked (GlcNAc...) asparagine glycosylation sites follow: Asn194 and Asn359.

This sequence belongs to the glycosyltransferase 10 family. Mg(2+) is required as a cofactor. It depends on Mn(2+) as a cofactor. Post-translationally, N-glycosylated. Glycosylation is important for enzymatic activity. In terms of tissue distribution, expressed in the pharyngeal-intestinal (PI) and anal valves. Expressed in ASG neurons and in one or two neurons in the retrovesicular ganglion and two neurons posterior to the PI valve and PHA and PHB neurons in the tail.

It is found in the golgi apparatus. The protein resides in the golgi stack membrane. The enzyme catalyses N(4)-{beta-D-GlcNAc-(1-&gt;2)-alpha-D-Man-(1-&gt;3)-[beta-D-GlcNAc-(1-&gt;2)-alpha-D-Man-(1-&gt;6)]-beta-D-Man-(1-&gt;4)-beta-D-GlcNAc-(1-&gt;4)-beta-D-GlcNAc}-L-asparaginyl-[protein] + GDP-beta-L-fucose = N(4)-{beta-D-GlcNAc-(1-&gt;2)-alpha-D-Man-(1-&gt;3)-[beta-D-GlcNAc-(1-&gt;2)-alpha-D-Man-(1-&gt;6)]-beta-D-Man-(1-&gt;4)-beta-D-GlcNAc-(1-&gt;4)-[alpha-L-Fuc(1-&gt;3)]-beta-D-GlcNAc}-L-asparaginyl-[protein] + GDP + H(+). Its pathway is protein modification; protein glycosylation. With respect to regulation, inhibited by Cu(2+) or Zn(2+) and to a lesser extent Ni(2+) ions. Its function is as follows. Preferentially catalyzes the addition of fucose in alpha 1-3 linkage to the first GlcNAc residue (with or without alpha 1,6-linked fucose), next to the peptide chains in N-glycans. Unlike in mammals, does not require the prior action of N-acetylglucosaminyltransferase I to generate complex N-glycans. This chain is Alpha-(1,3)-fucosyltransferase fut-1, found in Caenorhabditis elegans.